The chain runs to 189 residues: Small ribosomal subunit protein uS5 (189 aa).

In terms of domain architecture, S5 DRBM spans 22–85; sequence FVDKLVAINR…EAAKRELIFV (64 aa).

Belongs to the universal ribosomal protein uS5 family. Part of the 30S ribosomal subunit. Contacts proteins S4 and S8.

In terms of biological role, with S4 and S12 plays an important role in translational accuracy. Located at the back of the 30S subunit body where it stabilizes the conformation of the head with respect to the body. The sequence is that of Small ribosomal subunit protein uS5 from Rhizobium johnstonii (strain DSM 114642 / LMG 32736 / 3841) (Rhizobium leguminosarum bv. viciae).